A 252-amino-acid polypeptide reads, in one-letter code: 2-succinyl-6-hydroxy-2,4-cyclohexadiene-1-carboxylate synthase (252 aa).

This sequence belongs to the AB hydrolase superfamily. MenH family. In terms of assembly, monomer.

It carries out the reaction 5-enolpyruvoyl-6-hydroxy-2-succinyl-cyclohex-3-ene-1-carboxylate = (1R,6R)-6-hydroxy-2-succinyl-cyclohexa-2,4-diene-1-carboxylate + pyruvate. It participates in quinol/quinone metabolism; 1,4-dihydroxy-2-naphthoate biosynthesis; 1,4-dihydroxy-2-naphthoate from chorismate: step 3/7. It functions in the pathway quinol/quinone metabolism; menaquinone biosynthesis. Catalyzes a proton abstraction reaction that results in 2,5-elimination of pyruvate from 2-succinyl-5-enolpyruvyl-6-hydroxy-3-cyclohexene-1-carboxylate (SEPHCHC) and the formation of 2-succinyl-6-hydroxy-2,4-cyclohexadiene-1-carboxylate (SHCHC). The polypeptide is 2-succinyl-6-hydroxy-2,4-cyclohexadiene-1-carboxylate synthase (Salmonella newport (strain SL254)).